A 284-amino-acid chain; its full sequence is Small ribosomal subunit protein uS5 (284 aa).

The span at Met-1–Glu-10 shows a compositional bias: basic and acidic residues. The tract at residues Met-1–Glu-105 is disordered. Low complexity predominate over residues Glu-14–Glu-23. Over residues Asp-24–Ala-43 the composition is skewed to basic and acidic residues. The segment covering Glu-44–Gly-67 has biased composition (low complexity). A compositionally biased stretch (basic and acidic residues) spans Gln-68–Glu-105. The S5 DRBM domain occupies Ile-110–Val-173. The disordered stretch occupies residues Asp-246 to Glu-284.

The protein belongs to the universal ribosomal protein uS5 family. Part of the 30S ribosomal subunit. Contacts proteins S4 and S8.

With S4 and S12 plays an important role in translational accuracy. Functionally, located at the back of the 30S subunit body where it stabilizes the conformation of the head with respect to the body. The sequence is that of Small ribosomal subunit protein uS5 from Erythrobacter litoralis (strain HTCC2594).